The sequence spans 511 residues: Alpha-amylase 1A (511 aa).

An N-terminal signal peptide occupies residues 1 to 15 (MKLFWLLFTIGFCWA). Residue Gln-16 is modified to Pyrrolidone carboxylic acid. Disulfide bonds link Cys-43-Cys-101, Cys-85-Cys-130, and Cys-156-Cys-175. Positions 115, 173, and 182 each coordinate Ca(2+). Residue Arg-210 coordinates chloride. The Nucleophile role is filled by Asp-212. His-216 is a binding site for Ca(2+). The active-site Proton donor is the Glu-248. Chloride contacts are provided by Asn-313 and Arg-352. Position 365 is a deamidated asparagine; partial (Asn-365). A disulfide bridge connects residues Cys-393 and Cys-399. The residue at position 427 (Asn-427) is a Deamidated asparagine; partial; alternate. The N-linked (GlcNAc...) asparagine glycan is linked to Asn-427. A disulfide bond links Cys-465 and Cys-477. Asn-474 carries the post-translational modification Deamidated asparagine; partial. Asn-476 carries N-linked (GlcNAc...) asparagine glycosylation.

The protein belongs to the glycosyl hydrolase 13 family. In terms of assembly, monomer. Ca(2+) serves as cofactor. It depends on chloride as a cofactor.

Its subcellular location is the secreted. The enzyme catalyses Endohydrolysis of (1-&gt;4)-alpha-D-glucosidic linkages in polysaccharides containing three or more (1-&gt;4)-alpha-linked D-glucose units.. Its function is as follows. Calcium-binding enzyme that initiates starch digestion in the oral cavity. Catalyzes the hydrolysis of internal (1-&gt;4)-alpha-D-glucosidic bonds, yielding a mixture of maltose, isomaltose, small amounts of glucose as well as small linear and branched oligosaccharides called dextrins. This chain is Alpha-amylase 1A, found in Homo sapiens (Human).